The primary structure comprises 70 residues: Large ribosomal subunit protein bL31 (70 aa).

The Zn(2+) site is built by Cys16, Cys18, Cys37, and Cys40.

Belongs to the bacterial ribosomal protein bL31 family. Type A subfamily. Part of the 50S ribosomal subunit. Zn(2+) is required as a cofactor.

Binds the 23S rRNA. This Salmonella agona (strain SL483) protein is Large ribosomal subunit protein bL31.